The following is a 187-amino-acid chain: Ubiquinone biosynthesis protein COQ4 homolog, mitochondrial (187 aa).

H77, D78, H81, and E93 together coordinate Zn(2+).

It belongs to the COQ4 family. As to quaternary structure, component of a multi-subunit COQ enzyme complex. Zn(2+) serves as cofactor.

It localises to the mitochondrion inner membrane. It carries out the reaction a 4-hydroxy-3-methoxy-5-(all-trans-polyprenyl)benzoate + H(+) = a 2-methoxy-6-(all-trans-polyprenyl)phenol + CO2. It participates in cofactor biosynthesis; ubiquinone biosynthesis. Its function is as follows. Lyase that catalyzes the C1-decarboxylation of 4-hydroxy-3-methoxy-5-(all-trans-polyprenyl)benzoic acid into 2-methoxy-6-(all-trans-polyprenyl)phenol during ubiquinone biosynthesis. The sequence is that of Ubiquinone biosynthesis protein COQ4 homolog, mitochondrial from Leishmania braziliensis.